We begin with the raw amino-acid sequence, 302 residues long: Nucleotide-binding protein Bcep18194_A6125 (302 aa).

Gly8–Ser15 is an ATP binding site. Residue Asp57–Ser60 coordinates GTP.

Belongs to the RapZ-like family.

Functionally, displays ATPase and GTPase activities. The polypeptide is Nucleotide-binding protein Bcep18194_A6125 (Burkholderia lata (strain ATCC 17760 / DSM 23089 / LMG 22485 / NCIMB 9086 / R18194 / 383)).